Consider the following 224-residue polypeptide: 7-cyano-7-deazaguanine synthase (224 aa).

10 to 20 contacts ATP; it reads LSGGLDSATVV. The Zn(2+) site is built by cysteine 189, cysteine 199, cysteine 202, and cysteine 205.

It belongs to the QueC family. It depends on Zn(2+) as a cofactor.

The enzyme catalyses 7-carboxy-7-deazaguanine + NH4(+) + ATP = 7-cyano-7-deazaguanine + ADP + phosphate + H2O + H(+). Its pathway is purine metabolism; 7-cyano-7-deazaguanine biosynthesis. Catalyzes the ATP-dependent conversion of 7-carboxy-7-deazaguanine (CDG) to 7-cyano-7-deazaguanine (preQ(0)). The polypeptide is 7-cyano-7-deazaguanine synthase (Pseudomonas putida (strain ATCC 700007 / DSM 6899 / JCM 31910 / BCRC 17059 / LMG 24140 / F1)).